We begin with the raw amino-acid sequence, 141 residues long: MLLPKRTKYRKQFRGRMTGDTKGGDYVAFGDYGLVALEPAWIKSNQIEACRIVMSRHFRRGGKIYIRIFPDKPVTKKPAETRMGKGKGAVEYWVSVVKPGRVMFEVSGVTEEQAREAFRLAGHKLPIQTKMVKREVYDEAQ.

It belongs to the universal ribosomal protein uL16 family. In terms of assembly, part of the 50S ribosomal subunit.

In terms of biological role, binds 23S rRNA and is also seen to make contacts with the A and possibly P site tRNAs. The chain is Large ribosomal subunit protein uL16 from Deinococcus geothermalis (strain DSM 11300 / CIP 105573 / AG-3a).